A 1011-amino-acid chain; its full sequence is Antigenic heat-stable 120 kDa protein (1011 aa).

Disordered regions lie at residues 1 to 37 (DTSEFDPLANKEYTEEQKQTEEQEQKEFLSQTTTPAL), 54 to 73 (TPSMSALSGNISPDSQTSDP), and 348 to 396 (GQSK…PQSQ). Positions 12-27 (EYTEEQKQTEEQEQKE) are enriched in basic and acidic residues. Composition is skewed to polar residues over residues 348–373 (GQSKEQPLITPQQTTSSSVEPPQYKQ) and 380–396 (PTNQPLQPETSQMPQSQ).

The protein resides in the cytoplasm. The protein is Antigenic heat-stable 120 kDa protein (sca4) of Rickettsia sibirica subsp. mongolitimonae (Rickettsia mongolotimonae).